Reading from the N-terminus, the 94-residue chain is Co-chaperonin GroES (94 aa).

Belongs to the GroES chaperonin family. Heptamer of 7 subunits arranged in a ring. Interacts with the chaperonin GroEL.

The protein localises to the cytoplasm. Together with the chaperonin GroEL, plays an essential role in assisting protein folding. The GroEL-GroES system forms a nano-cage that allows encapsulation of the non-native substrate proteins and provides a physical environment optimized to promote and accelerate protein folding. GroES binds to the apical surface of the GroEL ring, thereby capping the opening of the GroEL channel. This chain is Co-chaperonin GroES, found in Limosilactobacillus reuteri (strain DSM 20016) (Lactobacillus reuteri).